The primary structure comprises 146 residues: Hemoglobin subunit beta (146 aa).

V1 is subject to N-acetylvaline. The region spanning 2 to 146 is the Globin domain; the sequence is HLTGEEKAAV…VATALAHKYH (145 aa). T12 bears the Phosphothreonine mark. S44 bears the Phosphoserine mark. An N6-acetyllysine modification is found at K59. H63 lines the heme b pocket. K82 is modified (N6-acetyllysine). H92 serves as a coordination point for heme b. C93 is modified (S-nitrosocysteine). An N6-acetyllysine modification is found at K144.

This sequence belongs to the globin family. Heterotetramer of two alpha chains and two beta chains. Red blood cells.

Involved in oxygen transport from the lung to the various peripheral tissues. The protein is Hemoglobin subunit beta (HBB) of Macroderma gigas (Australian ghost bat).